The following is a 409-amino-acid chain: Translation initiation factor 2 subunit gamma (409 aa).

Residues 7 to 203 (QPEVNIGLVG…AIEREIPTPE (197 aa)) enclose the tr-type G domain. Positions 16 to 23 (GHVDHGKT) are G1. Mg(2+) is bound by residues aspartate 19, threonine 23, glycine 44, and serine 46. Residue 19 to 24 (DHGKTT) participates in GTP binding. Residues 44-48 (GISIR) form a G2 region. A G3 region spans residues 90-93 (DAPG). Residues 146 to 149 (NKID) and 181 to 183 (SAQ) each bind GTP. Residues 146-149 (NKID) form a G4 region. Residues 181–183 (SAQ) form a G5 region.

It belongs to the TRAFAC class translation factor GTPase superfamily. Classic translation factor GTPase family. EIF2G subfamily. Heterotrimer composed of an alpha, a beta and a gamma chain. It depends on Mg(2+) as a cofactor.

It catalyses the reaction GTP + H2O = GDP + phosphate + H(+). Its function is as follows. eIF-2 functions in the early steps of protein synthesis by forming a ternary complex with GTP and initiator tRNA. The sequence is that of Translation initiation factor 2 subunit gamma from Haloquadratum walsbyi (strain DSM 16790 / HBSQ001).